Here is an 856-residue protein sequence, read N- to C-terminus: DNA mismatch repair protein MutS (856 aa).

618–625 (GPNMGGKS) lines the ATP pocket.

Belongs to the DNA mismatch repair MutS family.

Functionally, this protein is involved in the repair of mismatches in DNA. It is possible that it carries out the mismatch recognition step. This protein has a weak ATPase activity. The chain is DNA mismatch repair protein MutS from Shewanella baltica (strain OS155 / ATCC BAA-1091).